The chain runs to 628 residues: Growth hormone receptor (628 aa).

A signal peptide spans M1–A18. Residues F19–P266 are Extracellular-facing. 3 N-linked (GlcNAc...) asparagine glycosylation sites follow: N33, N40, and N46. 2 disulfides stabilise this stretch: C56–C66 and C101–C112. A glycan (N-linked (GlcNAc...) asparagine) is linked at N115. C126 and C140 form a disulfide bridge. The 104-residue stretch at P151–S254 folds into the Fibronectin type-III domain. 3 N-linked (GlcNAc...) asparagine glycosylation sites follow: N156, N161, and N200. Positions Y240–S244 match the WSXWS motif motif. A helical membrane pass occupies residues W267 to F287. The Cytoplasmic portion of the chain corresponds to S288–L628. Positions K294–A379 are required for JAK2 binding. The short motif at I297–K305 is the Box 1 motif element. A UbE motif motif is present at residues D340 to D349. S341 is subject to Phosphoserine. A phosphotyrosine mark is found at Y483 and Y585.

It belongs to the type I cytokine receptor family. Type 1 subfamily. On growth hormone (GH) binding, forms homodimers and binds JAK2 via a box 1-containing domain. The soluble form (GHBP) is produced by phorbol ester-promoted proteolytic cleavage at the cell surface (shedding) by ADAM17/TACE. Shedding is inhibited by growth hormone (GH) binding to the receptor probably due to a conformational change in GHR rendering the receptor inaccessible to ADAM17. In terms of processing, on GH binding, phosphorylated on tyrosine residues in the cytoplasmic domain by JAK2. Post-translationally, ubiquitinated by the ECS(SOCS2) complex following ligand-binding and phosphorylation by JAK2, leading to its degradation by the proteasome. Regulation by the ECS(SOCS2) complex acts as a negative feedback loop of growth hormone receptor signaling. Ubiquitination is not sufficient for GHR internalization.

It is found in the cell membrane. The protein resides in the secreted. Its function is as follows. Receptor for pituitary gland growth hormone (GH1) involved in regulating postnatal body growth. On ligand binding, couples to the JAK2/STAT5 pathway. Functionally, the soluble form (GHBP) acts as a reservoir of growth hormone in plasma and may be a modulator/inhibitor of GH signaling. The polypeptide is Growth hormone receptor (GHR) (Cavia porcellus (Guinea pig)).